The chain runs to 170 residues: Photosystem II extrinsic protein V (170 aa).

Positions 1–33 (MASLFSTLQRSLKGLLILVPVLIGLVLASPAEA) are cleaved as a signal peptide. Residues Cys70, Cys73, His74, and Met137 each contribute to the heme c site.

It belongs to the cytochrome c family. PsbV subfamily. PSII is composed of 1 copy each of membrane proteins PsbA, PsbB, PsbC, PsbD, PsbE, PsbF, PsbH, PsbI, PsbJ, PsbK, PsbL, PsbM, PsbT, PsbX, PsbY, PsbZ, Psb30/Ycf12, peripheral proteins PsbO, CyanoQ (PsbQ), PsbU, PsbV and a large number of cofactors. It forms dimeric complexes. Heme c is required as a cofactor.

It is found in the cellular thylakoid membrane. Its function is as follows. One of the extrinsic, lumenal subunits of photosystem II (PSII). PSII is a light-driven water plastoquinone oxidoreductase, using light energy to abstract electrons from H(2)O, generating a proton gradient subsequently used for ATP formation. The extrinsic proteins stabilize the structure of photosystem II oxygen-evolving complex (OEC), the ion environment of oxygen evolution and protect the OEC against heat-induced inactivation. Low-potential cytochrome c that plays a role in the OEC of PSII. This is Photosystem II extrinsic protein V from Parasynechococcus marenigrum (strain WH8102).